The sequence spans 256 residues: Trypsin epsilon (256 aa).

The N-terminal stretch at 1–22 (MLKIAVLLSVLACALAGTIPDG) is a signal peptide. Positions 23 to 30 (LLPQLDGR) are cleaved as a propeptide — activation peptide. Residues 31–254 (IVGGYETSID…FHEWIERTAR (224 aa)) enclose the Peptidase S1 domain. The cysteines at positions 56 and 72 are disulfide-linked. Catalysis depends on charge relay system residues His71 and Asp116. Disulfide bonds link Cys180-Cys197 and Cys206-Cys230. Ser210 acts as the Charge relay system in catalysis.

It belongs to the peptidase S1 family.

The protein resides in the secreted. The protein localises to the extracellular space. It carries out the reaction Preferential cleavage: Arg-|-Xaa, Lys-|-Xaa.. The chain is Trypsin epsilon (epsilonTry) from Drosophila erecta (Fruit fly).